We begin with the raw amino-acid sequence, 514 residues long: Ribonuclease Y (514 aa).

Residues 3-23 (VLWMVLGLAIGIAVGAAAGYI) traverse the membrane as a helical segment. Residues 203–266 (TVKAVELPSD…EVARIAMERL (64 aa)) enclose the KH domain. In terms of domain architecture, HD spans 330–423 (VLAHSVEVAN…VATADAVSAA (94 aa)).

Belongs to the RNase Y family.

The protein resides in the cell membrane. Its function is as follows. Endoribonuclease that initiates mRNA decay. This Rubrobacter xylanophilus (strain DSM 9941 / JCM 11954 / NBRC 16129 / PRD-1) protein is Ribonuclease Y.